We begin with the raw amino-acid sequence, 135 residues long: Small ribosomal subunit protein uS11 (135 aa).

It belongs to the universal ribosomal protein uS11 family. Part of the 30S ribosomal subunit. Interacts with proteins S7 and S18. Binds to IF-3.

In terms of biological role, located on the platform of the 30S subunit, it bridges several disparate RNA helices of the 16S rRNA. Forms part of the Shine-Dalgarno cleft in the 70S ribosome. The protein is Small ribosomal subunit protein uS11 of Polynucleobacter necessarius subsp. necessarius (strain STIR1).